We begin with the raw amino-acid sequence, 113 residues long: Hydrogenase maturation factor HypA (113 aa).

His-2 serves as a coordination point for Ni(2+). Cys-73, Cys-76, Cys-89, and Cys-92 together coordinate Zn(2+).

This sequence belongs to the HypA/HybF family.

Functionally, involved in the maturation of [NiFe] hydrogenases. Required for nickel insertion into the metal center of the hydrogenase. The polypeptide is Hydrogenase maturation factor HypA (Prosthecochloris aestuarii (strain DSM 271 / SK 413)).